The chain runs to 323 residues: tRNA dimethylallyltransferase (323 aa).

Residue 12–19 coordinates ATP; that stretch reads GPTAAGKT. 14-19 is a substrate binding site; that stretch reads TAAGKT. Interaction with substrate tRNA regions lie at residues 37-40 and 161-165; these read DSAL and QRLMR.

Belongs to the IPP transferase family. In terms of assembly, monomer. Mg(2+) is required as a cofactor.

The enzyme catalyses adenosine(37) in tRNA + dimethylallyl diphosphate = N(6)-dimethylallyladenosine(37) in tRNA + diphosphate. In terms of biological role, catalyzes the transfer of a dimethylallyl group onto the adenine at position 37 in tRNAs that read codons beginning with uridine, leading to the formation of N6-(dimethylallyl)adenosine (i(6)A). In Pseudomonas aeruginosa (strain LESB58), this protein is tRNA dimethylallyltransferase.